Consider the following 351-residue polypeptide: Probable protein phosphatase 2C 8 (351 aa).

Residues 1-63 (MLEKESDLTA…REAEEDKPSF (63 aa)) form a disordered region. A compositionally biased stretch (basic and acidic residues) spans 54-63 (REAEEDKPSF). Positions 74–348 (EADVAEDKGA…DNCTAIVIVF (275 aa)) constitute a PPM-type phosphatase domain. Mn(2+)-binding residues include Asp-114, Gly-115, Asp-295, and Asp-339.

It belongs to the PP2C family. Mg(2+) is required as a cofactor. The cofactor is Mn(2+).

The enzyme catalyses O-phospho-L-seryl-[protein] + H2O = L-seryl-[protein] + phosphate. It catalyses the reaction O-phospho-L-threonyl-[protein] + H2O = L-threonyl-[protein] + phosphate. This chain is Probable protein phosphatase 2C 8, found in Arabidopsis thaliana (Mouse-ear cress).